Here is a 245-residue protein sequence, read N- to C-terminus: 1-(5-phosphoribosyl)-5-[(5-phosphoribosylamino)methylideneamino] imidazole-4-carboxamide isomerase (245 aa).

Asp-7 serves as the catalytic Proton acceptor. The active-site Proton donor is Asp-129.

Belongs to the HisA/HisF family.

It is found in the cytoplasm. The enzyme catalyses 1-(5-phospho-beta-D-ribosyl)-5-[(5-phospho-beta-D-ribosylamino)methylideneamino]imidazole-4-carboxamide = 5-[(5-phospho-1-deoxy-D-ribulos-1-ylimino)methylamino]-1-(5-phospho-beta-D-ribosyl)imidazole-4-carboxamide. The protein operates within amino-acid biosynthesis; L-histidine biosynthesis; L-histidine from 5-phospho-alpha-D-ribose 1-diphosphate: step 4/9. The protein is 1-(5-phosphoribosyl)-5-[(5-phosphoribosylamino)methylideneamino] imidazole-4-carboxamide isomerase of Shewanella sp. (strain ANA-3).